We begin with the raw amino-acid sequence, 1578 residues long: Pentafunctional AROM polypeptide (1578 aa).

The tract at residues Met1 to Asn384 is 3-dehydroquinate synthase. Residues Asp44 to Asn46, Glu81 to Lys84, Gly114 to Val116, and Asp119 each bind NAD(+). Residue Arg130 participates in 7-phospho-2-dehydro-3-deoxy-D-arabino-heptonate binding. Position 139-140 (Thr139–Thr140) interacts with NAD(+). Residues Asp146 and Lys152 each coordinate 7-phospho-2-dehydro-3-deoxy-D-arabino-heptonate. Lys161 is a binding site for NAD(+). A 7-phospho-2-dehydro-3-deoxy-D-arabino-heptonate-binding site is contributed by Asn162. Residues Phe179–Thr182 and Asn190 each bind NAD(+). Glu194 contacts Zn(2+). 7-phospho-2-dehydro-3-deoxy-D-arabino-heptonate-binding positions include Glu194 to Lys197 and Lys250. Glu260 acts as the Proton acceptor; for 3-dehydroquinate synthase activity in catalysis. Residues Arg264–Asn268 and His271 contribute to the 7-phospho-2-dehydro-3-deoxy-D-arabino-heptonate site. His271 provides a ligand contact to Zn(2+). Residue His275 is the Proton acceptor; for 3-dehydroquinate synthase activity of the active site. The 7-phospho-2-dehydro-3-deoxy-D-arabino-heptonate site is built by His287 and Lys356. Residue His287 coordinates Zn(2+). Residues Val397–Val842 form an EPSP synthase region. The active-site For EPSP synthase activity is Cys824. The shikimate kinase stretch occupies residues Ser864–Ser1055. Residue Gly871–Thr878 participates in ATP binding. The tract at residues Leu1056–Asp1276 is 3-dehydroquinase. Catalysis depends on His1179, which acts as the Proton acceptor; for 3-dehydroquinate dehydratase activity. The active-site Schiff-base intermediate with substrate; for 3-dehydroquinate dehydratase activity is Lys1207. Residues Lys1289–Gly1578 form a shikimate dehydrogenase region.

It in the N-terminal section; belongs to the sugar phosphate cyclases superfamily. Dehydroquinate synthase family. This sequence in the 2nd section; belongs to the EPSP synthase family. In the 3rd section; belongs to the shikimate kinase family. The protein in the 4th section; belongs to the type-I 3-dehydroquinase family. It in the C-terminal section; belongs to the shikimate dehydrogenase family. As to quaternary structure, homodimer. It depends on Zn(2+) as a cofactor.

Its subcellular location is the cytoplasm. The catalysed reaction is 7-phospho-2-dehydro-3-deoxy-D-arabino-heptonate = 3-dehydroquinate + phosphate. It carries out the reaction 3-dehydroquinate = 3-dehydroshikimate + H2O. The enzyme catalyses shikimate + NADP(+) = 3-dehydroshikimate + NADPH + H(+). It catalyses the reaction shikimate + ATP = 3-phosphoshikimate + ADP + H(+). The catalysed reaction is 3-phosphoshikimate + phosphoenolpyruvate = 5-O-(1-carboxyvinyl)-3-phosphoshikimate + phosphate. It participates in metabolic intermediate biosynthesis; chorismate biosynthesis; chorismate from D-erythrose 4-phosphate and phosphoenolpyruvate: step 2/7. Its pathway is metabolic intermediate biosynthesis; chorismate biosynthesis; chorismate from D-erythrose 4-phosphate and phosphoenolpyruvate: step 3/7. The protein operates within metabolic intermediate biosynthesis; chorismate biosynthesis; chorismate from D-erythrose 4-phosphate and phosphoenolpyruvate: step 4/7. It functions in the pathway metabolic intermediate biosynthesis; chorismate biosynthesis; chorismate from D-erythrose 4-phosphate and phosphoenolpyruvate: step 5/7. It participates in metabolic intermediate biosynthesis; chorismate biosynthesis; chorismate from D-erythrose 4-phosphate and phosphoenolpyruvate: step 6/7. Functionally, the AROM polypeptide catalyzes 5 consecutive enzymatic reactions in prechorismate polyaromatic amino acid biosynthesis. This Neosartorya fischeri (strain ATCC 1020 / DSM 3700 / CBS 544.65 / FGSC A1164 / JCM 1740 / NRRL 181 / WB 181) (Aspergillus fischerianus) protein is Pentafunctional AROM polypeptide.